A 73-amino-acid chain; its full sequence is Putative antimicrobial peptide clone 4 (73 aa).

Residues 1-22 (MQMKYLIPIFFLVLIVADHCHA) form the signal peptide. Positions 45–73 (DITSQIEQYRNLQKREAELEDILANLPVY) are excised as a propeptide.

This sequence belongs to the non-disulfide-bridged peptide (NDBP) superfamily. Short antimicrobial peptide (group 4) family. Expressed by the venom gland.

It is found in the secreted. Functionally, antimicrobial peptide. Has a high antibacterial activity against the Gram-positive bacterium S.aureus (MIC=5-17.30 uM), the methicillin-resistant S.aureus (MRSA) (MIC=17.30 uM), and E.faecalis (MIC=69.23 uM). Has antifungal activity against Candida spp. and one Cryptococcus neoformans strains with MICs values ranging from 6.25 to 100 uM. Also shows an inhibitory activity on C.albicans biofilms at high concentrations. Has a moderate hemolytic potency (18% at 20 uM). Also inhibits the growth of the five cancer cell lines tested. In the model of polymicrobial sepsis, it exhibits an antibiotic effect, reducing the levels of microorganisms in the infectious focus and the inflammatory responses in the lung and cecum of septic animals. In Tityus costatus (Brazilian scorpion), this protein is Putative antimicrobial peptide clone 4.